Here is a 309-residue protein sequence, read N- to C-terminus: THO complex subunit Tho3 (309 aa).

6 WD repeats span residues 22 to 61, 65 to 107, 109 to 148, 192 to 231, 234 to 273, and 275 to 309; these read GQQGPIRSLGWNLSGSRLASSSSSGSVLVWNSDRLDFKFT, GNRG…PIAE, ESNYENIYATWSPSGNYCCASSRDDMLSFIDARERRIMET, AHNSNCFCIEFSPDNRHLAIGGADAITSLWDPQELICERS, RMDYPIRTLSFSYDSRYLASGSEDRYVDIADTKTGDQIWK, and PTNGPLNKVAWHPTKHILAYAVSEPNSSGLKIFGL.

This sequence belongs to the THOC3 family. In terms of assembly, component of the transcription/export (TREX) complex, which is at least is formed of SUB2, TEX1 and YRA1 and the THO complex composed of HPR1, MFT1, THO2 and THP1.

Its subcellular location is the nucleus. Functionally, component of the TREX complex, which operates in coupling transcription elongation to mRNA export. In Schizosaccharomyces pombe (strain 972 / ATCC 24843) (Fission yeast), this protein is THO complex subunit Tho3 (THO3).